A 318-amino-acid polypeptide reads, in one-letter code: Probable cell division protein WhiA (318 aa).

The H-T-H motif DNA-binding region spans 276–310; it reads TLQELGEMVESGSISKSGINHRLRKIDQIADKIRN.

This sequence belongs to the WhiA family.

Functionally, involved in cell division and chromosome segregation. This chain is Probable cell division protein WhiA, found in Exiguobacterium sibiricum (strain DSM 17290 / CCUG 55495 / CIP 109462 / JCM 13490 / 255-15).